Consider the following 267-residue polypeptide: Small ribosomal subunit protein uS2 (267 aa).

The interval Ile237–Ala267 is disordered. Over residues Gly238–Glu261 the composition is skewed to low complexity.

This sequence belongs to the universal ribosomal protein uS2 family.

This is Small ribosomal subunit protein uS2 from Chelativorans sp. (strain BNC1).